Consider the following 835-residue polypeptide: Protein translocase subunit SecA (835 aa).

ATP-binding positions include Gln85, 103 to 107, and Asp492; that span reads GEGKT. Positions 788-807 are disordered; the sequence is VQGEAVHPSSDGEEAKKKPV. Zn(2+)-binding residues include Cys819, Cys821, Cys830, and Cys831.

Belongs to the SecA family. Monomer and homodimer. Part of the essential Sec protein translocation apparatus which comprises SecA, SecYEG and auxiliary proteins SecDF. Other proteins may also be involved. It depends on Zn(2+) as a cofactor.

It localises to the cell membrane. The protein localises to the cytoplasm. It catalyses the reaction ATP + H2O + cellular proteinSide 1 = ADP + phosphate + cellular proteinSide 2.. Functionally, part of the Sec protein translocase complex. Interacts with the SecYEG preprotein conducting channel. Has a central role in coupling the hydrolysis of ATP to the transfer of proteins into and across the cell membrane, serving as an ATP-driven molecular motor driving the stepwise translocation of polypeptide chains across the membrane. The sequence is that of Protein translocase subunit SecA from Bacillus cereus (strain G9842).